A 392-amino-acid polypeptide reads, in one-letter code: Na(+)/H(+) antiporter NhaA 2 (392 aa).

Transmembrane regions (helical) follow at residues 20–40, 63–83, 99–119, 127–147, 158–178, 181–201, 209–229, 265–285, 298–318, 336–356, and 365–385; these read FFAA…AALI, VEHW…GLEI, ALPG…YVAF, IGGW…VLSL, IFLS…IALF, SDLS…LVAL, LLPY…SGIH, VAFA…LSGI, VALG…ALAI, GVAA…ALAF, and EVKV…VVVL.

Belongs to the NhaA Na(+)/H(+) (TC 2.A.33) antiporter family.

Its subcellular location is the cell inner membrane. The catalysed reaction is Na(+)(in) + 2 H(+)(out) = Na(+)(out) + 2 H(+)(in). Na(+)/H(+) antiporter that extrudes sodium in exchange for external protons. The polypeptide is Na(+)/H(+) antiporter NhaA 2 (Pseudomonas savastanoi pv. phaseolicola (strain 1448A / Race 6) (Pseudomonas syringae pv. phaseolicola (strain 1448A / Race 6))).